A 193-amino-acid polypeptide reads, in one-letter code: V-type ATP synthase subunit E (193 aa).

This sequence belongs to the V-ATPase E subunit family.

Functionally, produces ATP from ADP in the presence of a proton gradient across the membrane. The polypeptide is V-type ATP synthase subunit E (Anaeromyxobacter sp. (strain Fw109-5)).